The chain runs to 563 residues: Sulfite reductase [NADPH] hemoprotein beta-component (563 aa).

Residues C427, C433, C472, and C476 each coordinate [4Fe-4S] cluster. C476 lines the siroheme pocket.

It belongs to the nitrite and sulfite reductase 4Fe-4S domain family. In terms of assembly, alpha(8)-beta(8). The alpha component is a flavoprotein, the beta component is a hemoprotein. Siroheme serves as cofactor. It depends on [4Fe-4S] cluster as a cofactor.

The enzyme catalyses hydrogen sulfide + 3 NADP(+) + 3 H2O = sulfite + 3 NADPH + 4 H(+). It functions in the pathway sulfur metabolism; hydrogen sulfide biosynthesis; hydrogen sulfide from sulfite (NADPH route): step 1/1. Functionally, component of the sulfite reductase complex that catalyzes the 6-electron reduction of sulfite to sulfide. This is one of several activities required for the biosynthesis of L-cysteine from sulfate. The polypeptide is Sulfite reductase [NADPH] hemoprotein beta-component (Acidithiobacillus ferrooxidans (strain ATCC 53993 / BNL-5-31) (Leptospirillum ferrooxidans (ATCC 53993))).